We begin with the raw amino-acid sequence, 243 residues long: Ribonuclease PH (243 aa).

Phosphate-binding positions include R84 and 122 to 124; that span reads GTR.

It belongs to the RNase PH family. Homohexameric ring arranged as a trimer of dimers.

It carries out the reaction tRNA(n+1) + phosphate = tRNA(n) + a ribonucleoside 5'-diphosphate. Functionally, phosphorolytic 3'-5' exoribonuclease that plays an important role in tRNA 3'-end maturation. Removes nucleotide residues following the 3'-CCA terminus of tRNAs; can also add nucleotides to the ends of RNA molecules by using nucleoside diphosphates as substrates, but this may not be physiologically important. Probably plays a role in initiation of 16S rRNA degradation (leading to ribosome degradation) during starvation. The chain is Ribonuclease PH from Bdellovibrio bacteriovorus (strain ATCC 15356 / DSM 50701 / NCIMB 9529 / HD100).